The primary structure comprises 703 residues: FERM domain-containing protein 7 (703 aa).

An FERM domain is found at 2–282 (LHLKVQFLDD…EYHAFFRLSE (281 aa)). Positions 525–552 (RNMRIKSLQQDLQELQEAMARTSGRSNI) form a coiled coil.

In the developing cerebral cortex, strong expression is observed in the ventricular and intermediate zones at 13 and 17 dpc. At 17 dpc and P0, expression appears to be restricted to the cortical plate. In neonates, highly expressed in cortex, hippocampus, cerebellum, olfactory bulb and eye with little or no expression in liver, kidney, skeletal muscle or heart muscle (at protein level).

The protein resides in the cell projection. It localises to the neuron projection. It is found in the growth cone. Functionally, plays a role in neurite development, may be through the activation of the GTPase RAC1. Plays a role in the control of eye movement and gaze stability. The chain is FERM domain-containing protein 7 from Mus musculus (Mouse).